A 415-amino-acid polypeptide reads, in one-letter code: Serine hydroxymethyltransferase (415 aa).

(6S)-5,6,7,8-tetrahydrofolate-binding positions include leucine 119 and 123 to 125 (GHL). N6-(pyridoxal phosphate)lysine is present on lysine 228.

It belongs to the SHMT family. In terms of assembly, homodimer. The cofactor is pyridoxal 5'-phosphate.

Its subcellular location is the cytoplasm. It carries out the reaction (6R)-5,10-methylene-5,6,7,8-tetrahydrofolate + glycine + H2O = (6S)-5,6,7,8-tetrahydrofolate + L-serine. The protein operates within one-carbon metabolism; tetrahydrofolate interconversion. It participates in amino-acid biosynthesis; glycine biosynthesis; glycine from L-serine: step 1/1. Catalyzes the reversible interconversion of serine and glycine with tetrahydrofolate (THF) serving as the one-carbon carrier. This reaction serves as the major source of one-carbon groups required for the biosynthesis of purines, thymidylate, methionine, and other important biomolecules. Also exhibits THF-independent aldolase activity toward beta-hydroxyamino acids, producing glycine and aldehydes, via a retro-aldol mechanism. This chain is Serine hydroxymethyltransferase, found in Coprothermobacter proteolyticus (strain ATCC 35245 / DSM 5265 / OCM 4 / BT).